Reading from the N-terminus, the 319-residue chain is sn-1-specific diacylglycerol lipase ABHD11 (319 aa).

A mitochondrion-targeting transit peptide spans 1-28 (MTLKLAVLRQIFQGSKGWHLWQHWRAFY). Residues 69–304 (PPLVLLHGLF…GAGHWVHADK (236 aa)) form the AB hydrolase-1 domain. Catalysis depends on charge relay system residues Ser-143, Glu-239, and His-298.

This sequence belongs to the AB hydrolase superfamily. Post-translationally, phosphorylated.

Its subcellular location is the mitochondrion. It localises to the mitochondrion matrix. It carries out the reaction 1-octadecanoyl-2-(5Z,8Z,11Z,14Z-eicosatetraenoyl)-sn-glycerol + H2O = 2-(5Z,8Z,11Z,14Z-eicosatetraenoyl)-glycerol + octadecanoate + H(+). The catalysed reaction is a 1,2-diacyl-sn-glycerol + H2O = a 2-acylglycerol + a fatty acid + H(+). It catalyses the reaction a 1,3-diacyl-sn-glycerol + H2O = a 1-acyl-sn-glycerol + a fatty acid + H(+). The enzyme catalyses 1-octadecanoyl-2-(9Z-octadecenoyl)-sn-glycerol + H2O = 2-(9Z-octadecenoyl)-glycerol + octadecanoate + H(+). It carries out the reaction 1-octadecanoyl-2-(4Z,7Z,10Z,13Z,16Z,19Z-docosahexaenoyl)-sn-glycerol + H2O = 2-(4Z,7Z,10Z,13Z,16Z,19Z-docosahexaenoyl)-glycerol + octadecanoate + H(+). The catalysed reaction is 1,2-didecanoylglycerol + H2O = decanoylglycerol + decanoate + H(+). Catalyzes the hydrolysis of diacylglycerol in vitro and may function as a key regulator in lipid metabolism, namely by regulating the intracellular levels of diacylglycerol. 1,2-diacyl-sn-glycerols are the preferred substrate over 1,3-diacyl-sn-glycerols. The enzyme hydrolyzes stearate in preference to palmitate from the sn-1 position of 1,2-diacyl-sn-glycerols. In Xenopus tropicalis (Western clawed frog), this protein is sn-1-specific diacylglycerol lipase ABHD11.